A 189-amino-acid chain; its full sequence is Protein Rex (189 aa).

The span at 1–16 shows a compositional bias: basic residues; it reads MPKTRRRPRRSQRKRP. Residues 1 to 27 form a disordered region; sequence MPKTRRRPRRSQRKRPPTPWPTSQGLD. Positions 2 to 18 match the Nuclear localization signal, and RNA-binding (RxRE) motif; it reads PKTRRRPRRSQRKRPPT. A homomultimerization region spans residues 56–70; sequence RPAYIVTPYWPPVQS. The residue at position 70 (Ser-70) is a Phosphoserine; by host. Residues 73–189 are disordered; that stretch reads SPGTPSMDAL…PPSPGPSCPT (117 aa). Over residues 80–94 the composition is skewed to low complexity; sequence DALSAQLYSSLSLDS. The short motif at 82-93 is the Nuclear export signal element; it reads LSAQLYSSLSLD. Residues 123–131 form a homomultimerization region; that stretch reads PSSRPCANT. Residues 143-164 are compositionally biased toward polar residues; sequence LGSTSQPCLFQTPDSGPKTCTP. A Phosphothreonine; by host modification is found at Thr-174. Ser-177 carries the post-translational modification Phosphoserine; by host. Pro residues predominate over residues 178–189; the sequence is FPPPSPGPSCPT.

Belongs to the deltaretrovirus Rex protein family. In terms of assembly, homomultimer. Multimeric assembly is essential for activity and involves XPO1. Binds to human XPO1 and KPNB1. Interacts (via N-terminal nuclear localization signal) with human NPM1.

Its subcellular location is the host nucleus. It is found in the host nucleolus. The protein localises to the host cytoplasm. In terms of biological role, rex escorts unspliced gag-pro-pol and singly spliced env mRNAs out of the nucleus of infected cells. These mRNAs carry a recognition sequence called Rex responsive element (RxRE or XRE) located at the 3' region of the long terminal repeat (LTR). This function is essential since most HTLV proteins are translated from unspliced or partially spliced pre-mRNAs that cannot exit the nucleus by the pathway used by fully processed cellular mRNAs. Rex itself is translated from a fully spliced mRNA that probably readily exits the nucleus. Rex's nuclear localization signal (NLS) binds directly to KPNB1/importin beta-1 without previous binding to KPNA1/importin alpha-1. KPNB1 binds to the GDP bound form of RAN (Ran-GDP) and targets Rex to the nucleus. In the nucleus, the conversion from Ran-GDP to Ran-GTP dissociates Rex from KPNB1 and allows Rex's binding to the RRE in viral pre-mRNAs. Rex multimerizes on the RRE via cooperative assembly. This multimerization is critical for its full biological activity, since it may shield the viral RNA from being spliced or down-regulated, and probably exposes Rex's nuclear export signal (NES) to the surface. Rex can then form a complex with XPO1/CRM1, RANBP3 and Ran-GTP, leading to nuclear export of the complex. Conversion from Ran-GTP to Ran-GDP mediates dissociation of the Rex/RRE/XPO1/RANBP3/RAN complex, so that Rex can return to the nucleus for a subsequent round of export. The sequence is that of Protein Rex from Human T-cell leukemia virus 1 (strain Japan ATK-1 subtype A) (HTLV-1).